Here is a 161-residue protein sequence, read N- to C-terminus: Ribonuclease H (161 aa).

An RNase H type-1 domain is found at 3 to 144 (VLKQLSIFTD…CDTLARVAAE (142 aa)). Mg(2+) is bound by residues aspartate 12, glutamate 50, aspartate 72, and aspartate 136.

It belongs to the RNase H family. As to quaternary structure, monomer. Mg(2+) is required as a cofactor.

The protein resides in the cytoplasm. The enzyme catalyses Endonucleolytic cleavage to 5'-phosphomonoester.. Its function is as follows. Endonuclease that specifically degrades the RNA of RNA-DNA hybrids. The polypeptide is Ribonuclease H (Shewanella woodyi (strain ATCC 51908 / MS32)).